Reading from the N-terminus, the 171-residue chain is NADH-quinone oxidoreductase subunit C (171 aa).

This sequence belongs to the complex I 30 kDa subunit family. NDH-1 is composed of 14 different subunits. Subunits NuoB, C, D, E, F, and G constitute the peripheral sector of the complex.

The protein resides in the cell membrane. It carries out the reaction a quinone + NADH + 5 H(+)(in) = a quinol + NAD(+) + 4 H(+)(out). Its function is as follows. NDH-1 shuttles electrons from NADH, via FMN and iron-sulfur (Fe-S) centers, to quinones in the respiratory chain. The immediate electron acceptor for the enzyme in this species is believed to be ubiquinone. Couples the redox reaction to proton translocation (for every two electrons transferred, four hydrogen ions are translocated across the cytoplasmic membrane), and thus conserves the redox energy in a proton gradient. This chain is NADH-quinone oxidoreductase subunit C, found in Herpetosiphon aurantiacus (strain ATCC 23779 / DSM 785 / 114-95).